Consider the following 234-residue polypeptide: Large ribosomal subunit protein uL1 (234 aa).

Belongs to the universal ribosomal protein uL1 family. In terms of assembly, part of the 50S ribosomal subunit.

Functionally, binds directly to 23S rRNA. The L1 stalk is quite mobile in the ribosome, and is involved in E site tRNA release. In terms of biological role, protein L1 is also a translational repressor protein, it controls the translation of the L11 operon by binding to its mRNA. The chain is Large ribosomal subunit protein uL1 from Bartonella tribocorum (strain CIP 105476 / IBS 506).